A 286-amino-acid polypeptide reads, in one-letter code: ATP synthase gamma chain (286 aa).

This sequence belongs to the ATPase gamma chain family. F-type ATPases have 2 components, CF(1) - the catalytic core - and CF(0) - the membrane proton channel. CF(1) has five subunits: alpha(3), beta(3), gamma(1), delta(1), epsilon(1). CF(0) has three main subunits: a, b and c.

It localises to the cell inner membrane. In terms of biological role, produces ATP from ADP in the presence of a proton gradient across the membrane. The gamma chain is believed to be important in regulating ATPase activity and the flow of protons through the CF(0) complex. This is ATP synthase gamma chain from Flavobacterium psychrophilum (strain ATCC 49511 / DSM 21280 / CIP 103535 / JIP02/86).